Reading from the N-terminus, the 514-residue chain is MKIRSQVGMVLNLDKCIGCHTCSVTCKNVWTGREGMEYAWFNNVETKPGIGYPKNWEDQEEWQGGWVRDVNGKIRPRLGNKMGVITKIFANPVVPQIDDYYEPFTFDYEHLHSAPEGKHIPTARPRSLIDGKRMDKVIWGPNWEELLGGEFEKRARDRNFEAMQKEMYGQFENTFMMYLPRLCEHCLNPSCVATCPSGAIYKREEDGIVLIDQDKCRGWRLCISGCPYKKIYFNWKSGKSEKCIFCYPRIESGQPTVCSETCVGRIRYLGVLLYDADRIEEAASTEREVDLYERQCEVFLDPHDPSVIEEALKQGIPQNVIDAAQRSPVYKMAMDWKLALPLHPEYRTLPMVWYVPPLSPIQSYADAGGLPKSEGVLPAIESLRIPVQYLANMLSAGDTGPVLRALKRMMAMRHYMRSQTVEGVTDTRAIDEVGLSVAQVEEMYRYLAIANYEDRFVIPTSHREMAGDAFAERNGCGFTFGDGCHGSDSKFNLFNSSRIDAINITEVRDKAEGE.

4Fe-4S ferredoxin-type domains are found at residues 7-35 (VGMV…GREG), 174-205 (TFMM…KREE), and 207-236 (GIVL…FNWK). The [4Fe-4S] cluster site is built by cysteine 16, cysteine 19, cysteine 22, cysteine 26, cysteine 183, cysteine 186, and cysteine 191. [3Fe-4S] cluster-binding residues include cysteine 195, cysteine 216, and cysteine 222. [4Fe-4S] cluster contacts are provided by cysteine 226, cysteine 243, cysteine 246, cysteine 258, and cysteine 262.

Dimer of heterotrimers each composed of an alpha, a beta and a gamma chain. Alpha and beta are catalytic chains; gamma chains are involved in binding the enzyme complex to the cytoplasmic membrane. Requires [4Fe-4S] cluster as cofactor. [3Fe-4S] cluster is required as a cofactor.

The protein localises to the cell membrane. The enzyme catalyses nitrate + a quinol = a quinone + nitrite + H2O. In terms of biological role, this is a second nitrate reductase enzyme which can substitute for the NRA enzyme and allows E.coli to use nitrate as an electron acceptor during anaerobic growth. The beta chain is an electron transfer unit containing four cysteine clusters involved in the formation of iron-sulfur centers. Electrons are transferred from the gamma chain to the molybdenum cofactor of the alpha subunit. The chain is Respiratory nitrate reductase 2 beta chain (narY) from Escherichia coli (strain K12).